The chain runs to 302 residues: UDP-N-acetylenolpyruvoylglucosamine reductase (302 aa).

The region spanning 31-196 (KIGGPADVLA…LRAWISLERG (166 aa)) is the FAD-binding PCMH-type domain. Residue Arg175 is part of the active site. Residue Ser225 is the Proton donor of the active site. Residue Glu295 is part of the active site.

This sequence belongs to the MurB family. It depends on FAD as a cofactor.

The protein resides in the cytoplasm. It carries out the reaction UDP-N-acetyl-alpha-D-muramate + NADP(+) = UDP-N-acetyl-3-O-(1-carboxyvinyl)-alpha-D-glucosamine + NADPH + H(+). Its pathway is cell wall biogenesis; peptidoglycan biosynthesis. Functionally, cell wall formation. This is UDP-N-acetylenolpyruvoylglucosamine reductase from Caldanaerobacter subterraneus subsp. tengcongensis (strain DSM 15242 / JCM 11007 / NBRC 100824 / MB4) (Thermoanaerobacter tengcongensis).